The sequence spans 1213 residues: DNA-directed RNA polymerase subunit beta' (1213 aa).

Positions 60, 62, 75, and 78 each coordinate Zn(2+). Aspartate 450, aspartate 452, and aspartate 454 together coordinate Mg(2+). Residues cysteine 819, cysteine 893, cysteine 900, and cysteine 903 each contribute to the Zn(2+) site.

It belongs to the RNA polymerase beta' chain family. The RNAP catalytic core consists of 2 alpha, 1 beta, 1 beta' and 1 omega subunit. When a sigma factor is associated with the core the holoenzyme is formed, which can initiate transcription. It depends on Mg(2+) as a cofactor. Requires Zn(2+) as cofactor.

The catalysed reaction is RNA(n) + a ribonucleoside 5'-triphosphate = RNA(n+1) + diphosphate. Functionally, DNA-dependent RNA polymerase catalyzes the transcription of DNA into RNA using the four ribonucleoside triphosphates as substrates. This Streptococcus pyogenes serotype M6 (strain ATCC BAA-946 / MGAS10394) protein is DNA-directed RNA polymerase subunit beta'.